A 598-amino-acid polypeptide reads, in one-letter code: Movement protein Hsp70h (598 aa).

Belongs to the heat shock protein 70 family. As to quaternary structure, homomultimer. Interacts with p20. This interaction allows the docking of the latter to the virion.

The protein localises to the virion. The protein resides in the host cell junction. Its subcellular location is the host plasmodesma. Its function is as follows. Transports viral genome to neighboring plant cells directly through plasmosdesmata, without any budding. The movement protein allows efficient cell to cell propagation, by bypassing the host cell wall barrier. Two movement proteins, p6, Hsp70h and three structural proteins, CP, CPm, and P64 are essential for cell-cell movement. Also plays a role in virion formation. Together with CPm and p64, encapsidates the 5'-terminal portion of the viral genome. The chain is Movement protein Hsp70h from Beta vulgaris (Sugar beet).